A 261-amino-acid polypeptide reads, in one-letter code: MIYKCPMCREFFSERADLFMHQKIHTAEKPHKCDKCDKGFFHISELHIHWRDHTGEKVYKCDDCGKDFSTTTKLNRHKKIHTVEKPYKCYECGKAFNWSSHLQIHMRVHTGEKPYVCSECGRGFSNSSNLCMHQRVHTGEKPFKCEECGKAFRHTSSLCMHQRVHTGEKPYKCYECGKAFSQSSSLCIHQRVHTGEKPYRCCGCGKAFSQSSSLCIHQRVHTGEKPFKCDECGKAFSQSTSLCIHQRVHTKERNHLKISVI.

C2H2-type zinc fingers lie at residues 3–25 (YKCP…QKIH), 31–53 (HKCD…WRDH), 59–81 (YKCD…KKIH), 87–109 (YKCY…MRVH), 115–137 (YVCS…QRVH), 143–165 (FKCE…QRVH), 171–193 (YKCY…QRVH), 199–221 (YRCC…QRVH), and 227–249 (FKCD…QRVH). Lysine 257 participates in a covalent cross-link: Glycyl lysine isopeptide (Lys-Gly) (interchain with G-Cter in SUMO2).

This sequence belongs to the krueppel C2H2-type zinc-finger protein family.

The protein localises to the nucleus. Functionally, may be involved in transcriptional regulation. This chain is Zinc finger protein 664, found in Homo sapiens (Human).